Consider the following 209-residue polypeptide: Claudin-4 (209 aa).

The Cytoplasmic segment spans residues Met1–Gln7. The tract at residues Met1–Lys103 is interaction with EPHA2. A helical transmembrane segment spans residues Val8 to Pro28. The Extracellular portion of the chain corresponds to Met29 to Arg81. A disulfide bridge connects residues Cys54 and Cys64. The helical transmembrane segment at Ala82–Gly102 threads the bilayer. Residues Lys103 to Thr117 lie on the Cytoplasmic side of the membrane. The chain crosses the membrane as a helical span at residues Met118 to Trp138. The Extracellular segment spans residues Thr139 to Met160. Residues Gly161 to Leu181 traverse the membrane as a helical segment. Residues Cys182–Val209 lie on the Cytoplasmic side of the membrane. Tyr208 carries the post-translational modification Phosphotyrosine; by EPHA2. The tract at residues Tyr208–Val209 is interactions with TJP1, TJP2 and TJP3.

This sequence belongs to the claudin family. In terms of assembly, can form heteropolymeric strands with other claudins. Interacts with CLDN8. Interacts with CLDN1. Directly interacts with TJP1/ZO-1. Interacts with TJP2/ZO-2 and TJP3/ZO-3. Interacts with EPHA2; phosphorylates CLDN4 and may regulate tight junctions. As to quaternary structure, (Microbial infection) Interacts (via both extracellular domains) with Clostridium perfringens enterotoxin CPE; the interaction may disrupt claudin assembly in tight junctions. In terms of processing, phosphorylated. Phosphorylation by EPHA2 is stimulated by EFNA1 and alters interaction with TJP1.

It is found in the cell junction. It localises to the tight junction. Its subcellular location is the cell membrane. It catalyses the reaction chloride(in) = chloride(out). It carries out the reaction bromide(in) = bromide(out). The enzyme catalyses iodide(out) = iodide(in). The catalysed reaction is fluoride(in) = fluoride(out). Its function is as follows. Can associate with other claudins to regulate tight junction structural and functional strand dynamics. May coassemble with CLDN8 into tight junction strands containing anion-selective channels that convey paracellular chloride permeability in renal collecting ducts. May integrate into CLDN3 strands to modulate localized tight junction barrier properties. May disrupt strand assembly of channel-forming CLDN2 and CLDN15 and inhibit cation conductance. Cannot form tight junction strands on its own. This Homo sapiens (Human) protein is Claudin-4.